The following is a 70-amino-acid chain: Small ribosomal subunit protein bS21B (70 aa).

This sequence belongs to the bacterial ribosomal protein bS21 family.

This Cupriavidus metallidurans (strain ATCC 43123 / DSM 2839 / NBRC 102507 / CH34) (Ralstonia metallidurans) protein is Small ribosomal subunit protein bS21B.